The following is a 644-amino-acid chain: Exoribonuclease 2 (644 aa).

The 328-residue stretch at 189–516 (REDLTALNFV…NHRLLKAIIT (328 aa)) folds into the RNB domain. An S1 motif domain is found at 561–643 (DTRFTAEIID…ETRNVIARPV (83 aa)).

This sequence belongs to the RNR ribonuclease family. RNase II subfamily.

The protein resides in the cytoplasm. It carries out the reaction Exonucleolytic cleavage in the 3'- to 5'-direction to yield nucleoside 5'-phosphates.. In terms of biological role, involved in mRNA degradation. Hydrolyzes single-stranded polyribonucleotides processively in the 3' to 5' direction. The chain is Exoribonuclease 2 from Yersinia pseudotuberculosis serotype O:3 (strain YPIII).